We begin with the raw amino-acid sequence, 516 residues long: Acetylcholine receptor subunit delta (516 aa).

An N-terminal signal peptide occupies residues 1-21; the sequence is MEGSVLTLVLLAALVVCGSWG. The Extracellular segment spans residues 22–244; it reads LNEEERLIRH…VTFYLIIRRK (223 aa). N96 and N163 each carry an N-linked (GlcNAc...) asparagine glycan. The cysteines at positions 150 and 164 are disulfide-linked. The next 3 helical transmembrane spans lie at 245–269, 279–296, and 311–332; these read PLFYVINILVPCVLISFMINLVFYL, MAISVLLAQSVFLLLISK, and FLLFGMVLVTMVVVICVIVLNI. Residues 333–470 are Cytoplasmic-facing; that stretch reads HFRTPSTHVL…WNRVARTVDR (138 aa). The residue at position 389 (Y389) is a Phosphotyrosine; by Tyr-kinases. Residues 471-493 traverse the membrane as a helical segment; sequence LCLFVVTPIMVVGTAWIFLQGAY.

The protein belongs to the ligand-gated ion channel (TC 1.A.9) family. Acetylcholine receptor (TC 1.A.9.1) subfamily. Delta/CHRND sub-subfamily. In terms of assembly, pentamer of two alpha chains, and one each of the beta, delta, and gamma (in immature muscle) or epsilon (in mature muscle) chains. The muscle heteropentamer composed of alpha-1, beta-1, delta, epsilon subunits interacts with the alpha-conotoxin ImII.

The protein localises to the postsynaptic cell membrane. The protein resides in the cell membrane. It catalyses the reaction K(+)(in) = K(+)(out). The catalysed reaction is Na(+)(in) = Na(+)(out). Functionally, after binding acetylcholine, the AChR responds by an extensive change in conformation that affects all subunits and leads to opening of an ion-conducting channel across the plasma membrane. The sequence is that of Acetylcholine receptor subunit delta (CHRND) from Bos taurus (Bovine).